Reading from the N-terminus, the 247-residue chain is ATP synthase subunit a (247 aa).

Helical transmembrane passes span 24-44, 82-102, 112-132, 141-161, 194-214, and 219-239; these read IAFTNSSAYMFLAVALTSLLM, FFPFVFSIFMLVTVSNLVGII, IIVTAALAFLVFFTVLIYGFY, LFVPSGIPVVILPLVVTIEVI, MLGAMGIVGVFGAVLPLALVV, and LELLVAFLQAYVFTILTCIYI.

It belongs to the ATPase A chain family. In terms of assembly, F-type ATPases have 2 components, CF(1) - the catalytic core - and CF(0) - the membrane proton channel. CF(1) has five subunits: alpha(3), beta(3), gamma(1), delta(1), epsilon(1). CF(0) has three main subunits: a(1), b(2) and c(9-12). The alpha and beta chains form an alternating ring which encloses part of the gamma chain. CF(1) is attached to CF(0) by a central stalk formed by the gamma and epsilon chains, while a peripheral stalk is formed by the delta and b chains.

It localises to the cell inner membrane. Its function is as follows. Key component of the proton channel; it plays a direct role in the translocation of protons across the membrane. In Nitrobacter winogradskyi (strain ATCC 25391 / DSM 10237 / CIP 104748 / NCIMB 11846 / Nb-255), this protein is ATP synthase subunit a.